A 318-amino-acid polypeptide reads, in one-letter code: BES1/BZR1 homolog protein 2 (318 aa).

Gly residues predominate over residues 1–13 (MAAGGGGGGGGSS). Disordered stretches follow at residues 1–34 (MAAGGGGGGGGSSSGRTPTWKERENNKKRERRRR), 84–133 (FKPP…PSPS), 166–195 (NSAPVTPPLSSPTSRGSKRKLTSEQLPNGG), and 209–231 (APSSPTRRAGHQTPPTIPECDES). The required for DNA-binding stretch occupies residues 16-97 (RTPTWKEREN…ASDISGTPTN (82 aa)). Over residues 91–101 (ISGTPTNFSTN) the composition is skewed to polar residues. Residues 102–133 (SSIQPSPQSSAFPSPAPSYHGSPVSSSFPSPS) are compositionally biased toward low complexity.

Belongs to the BZR/LAT61 family. In terms of processing, phosphorylated. Phosphorylation increases protein degradation.

This Arabidopsis thaliana (Mouse-ear cress) protein is BES1/BZR1 homolog protein 2 (BEH2).